Consider the following 294-residue polypeptide: 4-hydroxy-tetrahydrodipicolinate synthase (294 aa).

Position 45 (threonine 45) interacts with pyruvate. Catalysis depends on tyrosine 133, which acts as the Proton donor/acceptor. The active-site Schiff-base intermediate with substrate is lysine 161. Residue isoleucine 203 coordinates pyruvate.

The protein belongs to the DapA family. In terms of assembly, homotetramer; dimer of dimers.

Its subcellular location is the cytoplasm. The enzyme catalyses L-aspartate 4-semialdehyde + pyruvate = (2S,4S)-4-hydroxy-2,3,4,5-tetrahydrodipicolinate + H2O + H(+). It participates in amino-acid biosynthesis; L-lysine biosynthesis via DAP pathway; (S)-tetrahydrodipicolinate from L-aspartate: step 3/4. Catalyzes the condensation of (S)-aspartate-beta-semialdehyde [(S)-ASA] and pyruvate to 4-hydroxy-tetrahydrodipicolinate (HTPA). The chain is 4-hydroxy-tetrahydrodipicolinate synthase from Shewanella sp. (strain MR-4).